A 498-amino-acid polypeptide reads, in one-letter code: GPI mannosyltransferase 4 (498 aa).

The next 9 membrane-spanning stretches (helical) occupy residues 4 to 24 (AVIR…PAYV), 60 to 80 (FAPL…FNAG), 118 to 134 (AFLL…QSHT), 135 to 155 (FSNS…EVVI), 169 to 189 (GVLG…AGYL), 208 to 228 (LAAL…IDTL), 261 to 281 (YTHI…FALG), 286 to 303 (LSLP…LSLF), and 332 to 352 (LTLT…IMGV). The N-linked (GlcNAc...) asparagine glycan is linked to Asn-429.

It belongs to the glycosyltransferase 22 family. PIGZ subfamily.

The protein localises to the endoplasmic reticulum membrane. It participates in glycolipid biosynthesis; glycosylphosphatidylinositol-anchor biosynthesis. Its function is as follows. Alpha-1,2-mannosyltransferase involved in glycosylphosphatidylinositol-anchor biosynthesis. Transfers a fourth mannose to trimannosyl-GPIs during GPI precursor assembly. The presence of a fourth mannose in GPI is essential in fungi. This Eremothecium gossypii (strain ATCC 10895 / CBS 109.51 / FGSC 9923 / NRRL Y-1056) (Yeast) protein is GPI mannosyltransferase 4 (SMP3).